Here is a 127-residue protein sequence, read N- to C-terminus: Glycine cleavage system H protein (127 aa).

Residues 24–105 (TVKVGISDHA…PYEAWLFAVR (82 aa)) enclose the Lipoyl-binding domain. At lysine 65 the chain carries N6-lipoyllysine.

It belongs to the GcvH family. As to quaternary structure, the glycine cleavage system is composed of four proteins: P, T, L and H. (R)-lipoate is required as a cofactor.

In terms of biological role, the glycine cleavage system catalyzes the degradation of glycine. The H protein shuttles the methylamine group of glycine from the P protein to the T protein. This chain is Glycine cleavage system H protein, found in Methylococcus capsulatus (strain ATCC 33009 / NCIMB 11132 / Bath).